Reading from the N-terminus, the 377-residue chain is Enoyl reductase cheB (377 aa).

Positions Gly18–Val361 are enoyl reductase (ER) domain. Cys49 to Lys52 lines the NADP(+) pocket. Substrate is bound at residue Pro137–Gly144. NADP(+) is bound by residues Ser173–Val176, Ser200–Asn203, Tyr218, Leu265–Glu266, and Thr283. Gly285–Ile289 contributes to the substrate binding site. Residue Ile354–Ser355 coordinates NADP(+).

The protein belongs to the zinc-containing alcohol dehydrogenase family. It depends on heme as a cofactor.

It functions in the pathway secondary metabolite biosynthesis. Enoyl reductase; part of the gene cluster that mediates the biosynthesis of chaetoglobosin A which has a unique inhibitory activity against actin polymerization in mammalian cells. Chaetoglobosin A and its intermediates are involved in the morphological differentiation of C.globosum. The first step of the pathway is the synthesis of prochaetoglobosin I via condensation of one acetyl-CoA, 8 malonyl-CoA, and a L-tryptophan molecule by the PKS-NRPS hybrid synthetase cheA, followed by reduction of backbone double bond to install desired geometry by the enoyl reductase cheB. Further multiple oxidation steps performed by the cytochrome P450 monooxygenases cheE and cheG, as well as by the FAD-linked oxidoreductase cheF, lead to the formation of chaetoglobosin A. Depending on the order of action of these reductases, distinct intermediates can be identified. Within the pathway, the cytochrome P450 monooxygenase cheE catalyzes a stereospecific epoxidation on prochaetoglobosin I, cytoglobosin D, and chaetoglobosin J intermediates. The FAD-linked oxidoreductase cheF performs dehydrogenation of the C-20 hydroxyl groups in the 20-dihyrochaetoglobosin A and cytoglobosin D intermediates. Finally, the cytochrome P450 monooxygenase cheG can catalyze the stereospecific dihydroxylation of prochaetoglobosin I and prochaetoglobosin IV at C-19 and C-20, respectively. The Diels-Alderase cheD may play a role in the post-PKS-NRPS biosynthetic steps catalyzing Diels-Alder cyclization. This chain is Enoyl reductase cheB, found in Chaetomium globosum (strain ATCC 6205 / CBS 148.51 / DSM 1962 / NBRC 6347 / NRRL 1970) (Soil fungus).